A 173-amino-acid polypeptide reads, in one-letter code: MDLVIGRVAKAHGVTGELVVEVRTDDPDARFVPGARLRGRAPRGGAERAFVVESVRPHGGRLLLRLDGVADRTAADALRGTVFLVDSADLPPIEEPDEYYDHQLEGLLVRTVDGVDVGTVAEVLHTAAGELLSVKTPEGAEILVPFVTAIVPRVSLADGLVEIDPPEGLLDLE.

The 74-residue stretch at P96–L169 folds into the PRC barrel domain.

Belongs to the RimM family. Binds ribosomal protein uS19.

It is found in the cytoplasm. In terms of biological role, an accessory protein needed during the final step in the assembly of 30S ribosomal subunit, possibly for assembly of the head region. Essential for efficient processing of 16S rRNA. May be needed both before and after RbfA during the maturation of 16S rRNA. It has affinity for free ribosomal 30S subunits but not for 70S ribosomes. This is Ribosome maturation factor RimM from Mycobacterium sp. (strain JLS).